The primary structure comprises 403 residues: MPTSKRTAAIIVAAGRGLRAGTGGPKQYRTIAGRTVIARAMEAFCDHPDVFAVQPVLNPDDLAMFNQAVAGFRYRPPANGGATRQASVHAGLEALAADAPDIVLIHDAARPFATPALIRRAIEATDITGAAVPVIPVTDTIKQVDASGAVNATPDRAKLRIAQTPQAFRFDVILDAHRRAARDGRDDFTDDAALAEWVGLTVATFEGDAANMKLTTPEDFVREEARLAAMLGDIRTGTGYDVHAFGDGDHVMLCGVKVPHNRGFLAHSDGDVGLHALVDAILGALADGDIGSHFPPSDPQWKGAASDKFLKYAVDRVAARGGRIANLEVTMICERPKIGPLRDTMRARIAEITGVAISRIAVKATTSERLGFTGREEGIATTASATVRLPWNDSDQEDKGWST.

The 2-C-methyl-D-erythritol 4-phosphate cytidylyltransferase stretch occupies residues Met-1–Ile-234. A 2-C-methyl-D-erythritol 2,4-cyclodiphosphate synthase region spans residues Arg-235–Thr-403. Residues Asp-241 and His-243 each contribute to the a divalent metal cation site. 4-CDP-2-C-methyl-D-erythritol 2-phosphate-binding positions include Asp-241–His-243 and His-267–Ser-268. His-275 lines the a divalent metal cation pocket. 4-CDP-2-C-methyl-D-erythritol 2-phosphate is bound by residues Asp-289–Gly-291, Thr-365–Glu-368, Phe-372, and Arg-375.

The protein in the N-terminal section; belongs to the IspD/TarI cytidylyltransferase family. IspD subfamily. This sequence in the C-terminal section; belongs to the IspF family. A divalent metal cation is required as a cofactor.

The catalysed reaction is 2-C-methyl-D-erythritol 4-phosphate + CTP + H(+) = 4-CDP-2-C-methyl-D-erythritol + diphosphate. The enzyme catalyses 4-CDP-2-C-methyl-D-erythritol 2-phosphate = 2-C-methyl-D-erythritol 2,4-cyclic diphosphate + CMP. The protein operates within isoprenoid biosynthesis; isopentenyl diphosphate biosynthesis via DXP pathway; isopentenyl diphosphate from 1-deoxy-D-xylulose 5-phosphate: step 2/6. Its pathway is isoprenoid biosynthesis; isopentenyl diphosphate biosynthesis via DXP pathway; isopentenyl diphosphate from 1-deoxy-D-xylulose 5-phosphate: step 4/6. Bifunctional enzyme that catalyzes the formation of 4-diphosphocytidyl-2-C-methyl-D-erythritol from CTP and 2-C-methyl-D-erythritol 4-phosphate (MEP) (IspD), and catalyzes the conversion of 4-diphosphocytidyl-2-C-methyl-D-erythritol 2-phosphate (CDP-ME2P) to 2-C-methyl-D-erythritol 2,4-cyclodiphosphate (ME-CPP) with a corresponding release of cytidine 5-monophosphate (CMP) (IspF). The chain is Bifunctional enzyme IspD/IspF from Nitrobacter hamburgensis (strain DSM 10229 / NCIMB 13809 / X14).